The following is a 340-amino-acid chain: Short-chain dehydrogenase/reductase prx1 (340 aa).

Positions 60, 84, 104, 131, and 162 each coordinate NADP(+). Residue S184 is the Proton donor of the active site. NADP(+) contacts are provided by Y210 and K214. Residue Y210 is the Proton acceptor of the active site. Catalysis depends on K214, which acts as the Lowers pKa of active site Tyr.

Belongs to the short-chain dehydrogenases/reductases (SDR) family.

It participates in sesquiterpene biosynthesis. Short-chain dehydrogenase/reductase; part of the gene cluster that mediates the biosynthesis of PR-toxin, a bicyclic sesquiterpene belonging to the eremophilane class and acting as a mycotoxin. The first step of the pathway is catalyzed by the aristolochene synthase which performs the cyclization of trans,trans-farnesyl diphosphate (FPP) to the bicyclic sesquiterpene aristolochene. Following the formation of aristolochene, the non-oxygenated aristolochene is converted to the trioxygenated intermediate eremofortin B, via 7-epi-neopetasone. This conversion appears to involve three enzymes, a hydroxysterol oxidase-like enzyme, the quinone-oxidase prx3 that forms the quinone-type-structure in the bicyclic nucleus of aristolochene with the C8-oxo group and the C-3 hydroxyl group, and the P450 monooxygenase ORF6 that introduces the epoxide at the double bond between carbons 1 and 2. No monoxy or dioxy-intermediates have been reported to be released to the broth, so these three early oxidative reactions may be coupled together. Eremofortin B is further oxidized by another P450 monooxygenase, that introduces a second epoxide between carbons 7 and 11 prior to acetylation to eremofortin A by the acetyltransferase ORF8. The second epoxidation may be performed by a second P450 monooxygenase. After the acetylation step, eremofortin A is converted to eremofortin C and then to PR-toxin. First the conversion of eremofortin A to eremofortin C proceeds by oxidation of the side chain of the molecule at C-12 and is catalyzed by the short-chain oxidoreductase prx1. The cytochrome P450 monooxygenase ORF6 is probably also involved in this step. The primary alcohol formed at C-12 is finally oxidized by the short-chain alcohol dehydrogenase prx4 that forms PR-toxin. The protein is Short-chain dehydrogenase/reductase prx1 of Penicillium roqueforti (strain FM164).